A 245-amino-acid chain; its full sequence is Probable 2-phosphosulfolactate phosphatase (245 aa).

The protein belongs to the ComB family. Mg(2+) is required as a cofactor.

It carries out the reaction (2R)-O-phospho-3-sulfolactate + H2O = (2R)-3-sulfolactate + phosphate. This is Probable 2-phosphosulfolactate phosphatase from Nostoc sp. (strain PCC 7120 / SAG 25.82 / UTEX 2576).